Here is a 289-residue protein sequence, read N- to C-terminus: Protein FraH (289 aa).

Residues 4–49 (CPNCNHPNPDGAVQCEACYTPLPATSNCPNCGATVQSDAAFCGQCG) form a DZANK-type zinc finger. A zinc finger lies at 18–48 (CEACYTPLPATSNCPNCGATVQSDAAFCGQC). In terms of domain architecture, FHA spans 204–260 (VHIGKPNDRIPPDVDVSGFANSEIVSRVHADIRLEGDAHYIEDVGSSNGTYINNLPL).

Putative heterocyst to vegetative cell connection. In Nostoc sp. (strain PCC 7120 / SAG 25.82 / UTEX 2576), this protein is Protein FraH (fraH).